Here is a 111-residue protein sequence, read N- to C-terminus: Prothymosin alpha (111 aa).

N-acetylmethionine is present on Met1. The tract at residues 1–111 (MSDAAVDTSS…TKKQKTEEDD (111 aa)) is disordered. Ser2 carries the post-translational modification N-acetylserine; in Prothymosin alpha, N-terminally processed. Residue Ser2 is modified to Phosphoserine. Thr8 is modified (phosphothreonine). Phosphoserine is present on residues Ser9 and Ser10. Thr13 and Thr14 each carry phosphothreonine. The span at 13–31 (TTKDLKEKKEVVEEAENGR) shows a compositional bias: basic and acidic residues. Lys15 is modified (N6-acetyllysine; alternate). Lys15 carries the post-translational modification N6-succinyllysine; alternate. The span at 43-84 (ENGEQEADNEVDEEEEEGGEEEEEEEEGDGEEEDGDEDEEAE) shows a compositional bias: acidic residues. Residues 101 to 111 (DTKKQKTEEDD) show a composition bias toward basic and acidic residues. At Thr102 the chain carries Phosphothreonine. Position 103 is an N6-acetyllysine; alternate (Lys103). Lys103 is covalently cross-linked (Glycyl lysine isopeptide (Lys-Gly) (interchain with G-Cter in SUMO2); alternate). A Phosphothreonine modification is found at Thr107.

This sequence belongs to the pro/parathymosin family. Interacts with NUPR1; regulates apoptotic process. Post-translationally, covalently linked to a small RNA of about 20 nucleotides.

The protein localises to the nucleus. Its function is as follows. Prothymosin alpha may mediate immune function by conferring resistance to certain opportunistic infections. The polypeptide is Prothymosin alpha (Ptma) (Mus musculus (Mouse)).